The sequence spans 34 residues: Potassium channel toxin (34 aa).

Disulfide bonds link C6-C25, C11-C29, and C15-C31.

The protein belongs to the short scorpion toxin superfamily. Potassium channel inhibitor family. Alpha-KTx 21 subfamily. In terms of tissue distribution, expressed by the venom gland.

It is found in the secreted. Functionally, toxin that blocks voltage-gated potassium channels (Kv). This chain is Potassium channel toxin, found in Tityus metuendus (Scorpion).